The sequence spans 70 residues: Large ribosomal subunit protein uL29 (70 aa).

It belongs to the universal ribosomal protein uL29 family.

The chain is Large ribosomal subunit protein uL29 from Clostridium novyi (strain NT).